Here is a 763-residue protein sequence, read N- to C-terminus: Phosphoglycerol transferase I (763 aa).

Helical transmembrane passes span 1 to 21 (MSEL…AWKA), 26 to 46 (WWFA…ITLF), 77 to 97 (ILPG…LGWI), and 108 to 128 (FGYS…SPAF).

This sequence belongs to the OpgB family.

The protein localises to the cell inner membrane. It carries out the reaction a phosphatidylglycerol + a membrane-derived-oligosaccharide D-glucose = a 1,2-diacyl-sn-glycerol + a membrane-derived-oligosaccharide 6-(glycerophospho)-D-glucose.. The protein operates within glycan metabolism; osmoregulated periplasmic glucan (OPG) biosynthesis. Transfers a phosphoglycerol residue from phosphatidylglycerol to the membrane-bound nascent glucan backbones. This chain is Phosphoglycerol transferase I, found in Escherichia coli O7:K1 (strain IAI39 / ExPEC).